The primary structure comprises 487 residues: 3-ketoacyl-CoA synthase 17 (487 aa).

Transmembrane regions (helical) follow at residues 23 to 43 (LITHFFKLMFLPLMAVLFMNV) and 57 to 77 (STGFIFVITLAIVGSIVFFMS). The region spanning 74–363 (FFMSRPRSIY…FFATFVAKRL (290 aa)) is the FAE domain. Residues cysteine 218, histidine 297, histidine 382, histidine 386, histidine 415, and asparagine 419 contribute to the active site.

It belongs to the thiolase-like superfamily. Chalcone/stilbene synthases family. Expressed in flowers.

Its subcellular location is the membrane. It catalyses the reaction a very-long-chain acyl-CoA + malonyl-CoA + H(+) = a very-long-chain 3-oxoacyl-CoA + CO2 + CoA. It participates in lipid metabolism; fatty acid biosynthesis. Its activity is regulated as follows. Inhibited by K3 herbicides such as alachlor, allidochlor, anilofos, cafenstrole, fentrazamide and flufenacet. Strongly inhibited by metazachlor. In terms of biological role, active on saturated acyl-CoAs up to C22. Mediates the synthesis of VLCFAs from 20 to 26 carbons in length (e.g. C20:1, C20, C24, C26). The chain is 3-ketoacyl-CoA synthase 17 from Arabidopsis thaliana (Mouse-ear cress).